The sequence spans 171 residues: Endoribonuclease ToxN (171 aa).

It belongs to the ToxN/AbiQ toxin family. In terms of assembly, one ToxN monomer binds to a 36-nt-long single repeat of the ToxI RNA; this complex forms a triangular heterohexameric complex with ToxN connected by the ToxI RNA to another toxin molecule. The ToxI repeat forms a pseudoknot which occludes the toxin active site. Interaction of ToxI with ToxN partially inhibits the latter's endoribonuclease activity in vitro. The complex self-assembles in vitro with either full-length or processed single repeats; during the process the precursor is processed.

Functionally, toxic component of a type III toxin-antitoxin (TA) system. An endoribonuclease which is active independently of the ribosome, cleaving between the second and third A of AAA(U/G) sequences, although not all occurrences of this tetranucleotide are cleaved. Digests many mRNA species, including its own transcript and its cognate antitoxin RNA ToxI. ToxI has 5.5 nearly identical 36 nucleotide-long repeats (a single repeat neutralizes the toxin in vivo); a single repeat folds into a pseudoknot which binds the toxin. The ToxI precursor RNA is a preferential target in vivo and is progressively degraded to single repeat lengths as ToxN-ToxI complex self-assembly occurs. In vivo expression of ToxI antitoxin inhibits endonuclease activity of ToxN. The toxin alone inhibits growth when expressed in E.coli without causing cell lysis; this bacteriostatic effect is neutralized by cognate RNA antitoxin ToxI. Non-cognate antitoxin RNA from B.thuringiensis does not inhibit this toxin. The RNA antitoxin is less stable than the proteinaceous toxin; synthesis of ToxI in the absence of new ToxN synthesis restores growth and also detectable accumulation of the ToxN protein. Negatively regulates its own operon in complex with ToxI. The toxin-antitoxin system functions in plasmid maintenance (a plasmid addiction system). The TA system protects P.atrosepticum strain 1043 against phage phiM1 and phiA2, E.coli against some but not all coliphages and S.marcescens against some bacteriophages, causing an abortive infection (Abi phenotype). Also protects P.atrosepticum strain 1043 against phage phiTE; phage that escape Abi and grow in this bacterium have evolved a pseudo-ToxI RNA by expanding a pre-existing sequence similar to the bona fide ToxI repeats. The chain is Endoribonuclease ToxN from Pectobacterium atrosepticum (Erwinia carotovora subsp. atroseptica).